The sequence spans 220 residues: Ribosomal RNA large subunit methyltransferase E (220 aa).

S-adenosyl-L-methionine-binding residues include G60, W62, D92, D108, and D133. K173 serves as the catalytic Proton acceptor. Residues 197–220 are disordered; that stretch reads RKPKASRDKSSETFILGRQLKQPR.

Belongs to the class I-like SAM-binding methyltransferase superfamily. RNA methyltransferase RlmE family.

It is found in the cytoplasm. It catalyses the reaction uridine(2552) in 23S rRNA + S-adenosyl-L-methionine = 2'-O-methyluridine(2552) in 23S rRNA + S-adenosyl-L-homocysteine + H(+). Specifically methylates the uridine in position 2552 of 23S rRNA at the 2'-O position of the ribose in the fully assembled 50S ribosomal subunit. This is Ribosomal RNA large subunit methyltransferase E from Burkholderia ambifaria (strain ATCC BAA-244 / DSM 16087 / CCUG 44356 / LMG 19182 / AMMD) (Burkholderia cepacia (strain AMMD)).